A 172-amino-acid polypeptide reads, in one-letter code: Shikimate kinase (172 aa).

Residue 11–16 (GAGKST) participates in ATP binding. Ser-15 provides a ligand contact to Mg(2+). Positions 33, 57, and 79 each coordinate substrate. Arg-117 lines the ATP pocket. Arg-136 contributes to the substrate binding site. Position 153 (Arg-153) interacts with ATP.

This sequence belongs to the shikimate kinase family. As to quaternary structure, monomer. Requires Mg(2+) as cofactor.

The protein localises to the cytoplasm. It catalyses the reaction shikimate + ATP = 3-phosphoshikimate + ADP + H(+). Its pathway is metabolic intermediate biosynthesis; chorismate biosynthesis; chorismate from D-erythrose 4-phosphate and phosphoenolpyruvate: step 5/7. In terms of biological role, catalyzes the specific phosphorylation of the 3-hydroxyl group of shikimic acid using ATP as a cosubstrate. This is Shikimate kinase from Pseudomonas syringae pv. syringae (strain B728a).